A 273-amino-acid polypeptide reads, in one-letter code: NH(3)-dependent NAD(+) synthetase (273 aa).

An ATP-binding site is contributed by Gly47 to Ser54. Mg(2+) is bound at residue Asp53. Arg139 is a binding site for deamido-NAD(+). Residue Thr159 coordinates ATP. Glu164 serves as a coordination point for Mg(2+). Deamido-NAD(+)-binding residues include Lys172 and Asp179. Positions 188 and 210 each coordinate ATP. His259–Lys260 serves as a coordination point for deamido-NAD(+).

Belongs to the NAD synthetase family. In terms of assembly, homodimer.

It catalyses the reaction deamido-NAD(+) + NH4(+) + ATP = AMP + diphosphate + NAD(+) + H(+). Its pathway is cofactor biosynthesis; NAD(+) biosynthesis; NAD(+) from deamido-NAD(+) (ammonia route): step 1/1. Catalyzes the ATP-dependent amidation of deamido-NAD to form NAD. Uses ammonia as a nitrogen source. In Staphylococcus aureus (strain bovine RF122 / ET3-1), this protein is NH(3)-dependent NAD(+) synthetase.